Here is a 766-residue protein sequence, read N- to C-terminus: Ent-copalyl diphosphate synthase 3 (766 aa).

Residues 1 to 30 (FRSTAAGRCLPVTCCVFPRHFRVSSSSILP) constitute a chloroplast transit peptide. Lys-222 contributes to the substrate binding site. Asp-354 and Asp-356 together coordinate Mg(2+). The DXDD motif motif lies at 354–357 (DVDD). Lys-440 is a binding site for substrate.

This sequence belongs to the terpene synthase family. Tpsc subfamily. Mg(2+) is required as a cofactor. As to expression, accumulates in leaves, and, at low levels, in germinating seeds.

The protein localises to the plastid. Its subcellular location is the chloroplast. It catalyses the reaction (2E,6E,10E)-geranylgeranyl diphosphate = ent-copalyl diphosphate. The protein operates within plant hormone biosynthesis; gibberellin biosynthesis. It participates in secondary metabolite biosynthesis; terpenoid biosynthesis. Functionally, involved in the biosynthesis of ent-kaurene diterpenoids natural products such as oridonin, miltiradiene, eriocalyxin B and nezukol, known to exhibit antitumor, anti-inflammatory and antibacterial activities, and in the production of gibberellins phytohormones. Catalyzes the conversion of (2E,6E,10E)-geranylgeranyl diphosphate (GGPP) to ent-copalyl diphosphate (ent-CPP). This is Ent-copalyl diphosphate synthase 3 from Isodon eriocalyx (Plectranthus eriocalyx).